The chain runs to 155 residues: Aspartate carbamoyltransferase regulatory chain (155 aa).

Zn(2+) is bound by residues cysteine 109, cysteine 114, cysteine 138, and cysteine 141.

The protein belongs to the PyrI family. In terms of assembly, contains catalytic and regulatory chains. Zn(2+) is required as a cofactor.

In terms of biological role, involved in allosteric regulation of aspartate carbamoyltransferase. In Vibrio cholerae serotype O1 (strain ATCC 39315 / El Tor Inaba N16961), this protein is Aspartate carbamoyltransferase regulatory chain.